Reading from the N-terminus, the 78-residue chain is UPF0349 protein GK2958 (78 aa).

It belongs to the UPF0349 family.

The polypeptide is UPF0349 protein GK2958 (Geobacillus kaustophilus (strain HTA426)).